A 363-amino-acid polypeptide reads, in one-letter code: 3-dehydroquinate synthase (363 aa).

Residues 72–77 (SGEKEK), 130–131 (TT), Lys142, and Lys151 contribute to the NAD(+) site. Zn(2+) is bound by residues Glu184, His247, and His264.

This sequence belongs to the sugar phosphate cyclases superfamily. Dehydroquinate synthase family. Requires Co(2+) as cofactor. The cofactor is Zn(2+). NAD(+) serves as cofactor.

The protein resides in the cytoplasm. It carries out the reaction 7-phospho-2-dehydro-3-deoxy-D-arabino-heptonate = 3-dehydroquinate + phosphate. It participates in metabolic intermediate biosynthesis; chorismate biosynthesis; chorismate from D-erythrose 4-phosphate and phosphoenolpyruvate: step 2/7. Catalyzes the conversion of 3-deoxy-D-arabino-heptulosonate 7-phosphate (DAHP) to dehydroquinate (DHQ). The polypeptide is 3-dehydroquinate synthase (Bacillus thuringiensis subsp. konkukian (strain 97-27)).